The following is a 268-amino-acid chain: Tryptophan synthase alpha chain (268 aa).

Catalysis depends on proton acceptor residues Glu49 and Asp60.

It belongs to the TrpA family. In terms of assembly, tetramer of two alpha and two beta chains.

It carries out the reaction (1S,2R)-1-C-(indol-3-yl)glycerol 3-phosphate + L-serine = D-glyceraldehyde 3-phosphate + L-tryptophan + H2O. Its pathway is amino-acid biosynthesis; L-tryptophan biosynthesis; L-tryptophan from chorismate: step 5/5. Its function is as follows. The alpha subunit is responsible for the aldol cleavage of indoleglycerol phosphate to indole and glyceraldehyde 3-phosphate. The sequence is that of Tryptophan synthase alpha chain from Escherichia coli (strain 55989 / EAEC).